The sequence spans 286 residues: Putative L-ribulose-5-phosphate 3-epimerase SgbU (286 aa).

It belongs to the L-ribulose-5-phosphate 3-epimerase family.

The catalysed reaction is L-ribulose 5-phosphate = L-xylulose 5-phosphate. Catalyzes the isomerization of L-xylulose-5-phosphate to L-ribulose-5-phosphate (Potential). May be involved in the utilization of 2,3-diketo-L-gulonate. This chain is Putative L-ribulose-5-phosphate 3-epimerase SgbU (sgbU), found in Escherichia coli (strain K12).